The primary structure comprises 282 residues: ATP phosphoribosyltransferase (282 aa).

It belongs to the ATP phosphoribosyltransferase family. Long subfamily. The cofactor is Mg(2+).

The protein localises to the cytoplasm. It carries out the reaction 1-(5-phospho-beta-D-ribosyl)-ATP + diphosphate = 5-phospho-alpha-D-ribose 1-diphosphate + ATP. Its pathway is amino-acid biosynthesis; L-histidine biosynthesis; L-histidine from 5-phospho-alpha-D-ribose 1-diphosphate: step 1/9. Feedback inhibited by histidine. Its function is as follows. Catalyzes the condensation of ATP and 5-phosphoribose 1-diphosphate to form N'-(5'-phosphoribosyl)-ATP (PR-ATP). Has a crucial role in the pathway because the rate of histidine biosynthesis seems to be controlled primarily by regulation of HisG enzymatic activity. This chain is ATP phosphoribosyltransferase, found in Pyrobaculum calidifontis (strain DSM 21063 / JCM 11548 / VA1).